The chain runs to 141 residues: Hemoglobin subunit alpha (141 aa).

The region spanning 1-141 (VLSAEDKANV…VSTVLTSKYR (141 aa)) is the Globin domain. Ser-3 carries the phosphoserine modification. N6-succinyllysine occurs at positions 7 and 11. An N6-acetyllysine; alternate modification is found at Lys-16. Lys-16 carries the post-translational modification N6-succinyllysine; alternate. Tyr-24 is subject to Phosphotyrosine. Position 35 is a phosphoserine (Ser-35). Lys-40 bears the N6-succinyllysine mark. At Ser-49 the chain carries Phosphoserine. Residue His-58 coordinates O2. His-87 provides a ligand contact to heme b. Phosphoserine is present on Ser-102. A Phosphothreonine modification is found at Thr-108. Residues Ser-124 and Ser-131 each carry the phosphoserine modification. A phosphothreonine mark is found at Thr-134 and Thr-137. Position 138 is a phosphoserine (Ser-138).

This sequence belongs to the globin family. In terms of assembly, heterotetramer of two alpha chains and two beta chains. As to expression, red blood cells.

Functionally, involved in oxygen transport from the lung to the various peripheral tissues. This is Hemoglobin subunit alpha from Peromyscus crinitus (Canyon mouse).